We begin with the raw amino-acid sequence, 206 residues long: LexA repressor (206 aa).

Positions 28-48 (RAEIASELGFKSANAAEEHLK) form a DNA-binding region, H-T-H motif. Residues Ser122 and Lys160 each act as for autocatalytic cleavage activity in the active site.

This sequence belongs to the peptidase S24 family. In terms of assembly, homodimer.

The enzyme catalyses Hydrolysis of Ala-|-Gly bond in repressor LexA.. Its function is as follows. Represses a number of genes involved in the response to DNA damage (SOS response), including recA and lexA. In the presence of single-stranded DNA, RecA interacts with LexA causing an autocatalytic cleavage which disrupts the DNA-binding part of LexA, leading to derepression of the SOS regulon and eventually DNA repair. This Tolumonas auensis (strain DSM 9187 / NBRC 110442 / TA 4) protein is LexA repressor.